A 2604-amino-acid chain; its full sequence is Probable polyketide synthase 17 (2604 aa).

The Ketosynthase family 3 (KS3) domain occupies 11-433 (NDDIAIIGMG…GSNCHMILSE (423 aa)). Residues Cys-179, His-316, and His-356 each act as for beta-ketoacyl synthase activity in the active site. Residues 631–664 (GISPSIVVGHSFGEIPSALFSDVISLETAVKIVY) are acyl/malonyl transferases. Ser-641 (for acyl/malonyl transferase activity) is an active-site residue. The N-terminal hotdog fold stretch occupies residues 937–1057 (NNLLGHDQFA…GRIGLFKHNP (121 aa)). A PKS/mFAS DH domain is found at 937–1216 (NNLLGHDQFA…CTSLIRLKKQ (280 aa)). His-968 serves as the catalytic Proton acceptor; for dehydratase activity. The interval 1072 to 1216 (SFTTLTKSEV…CTSLIRLKKQ (145 aa)) is C-terminal hotdog fold. The Proton donor; for dehydratase activity role is filled by Asp-1132. Residues 1357 to 1407 (GESEHFSPSNPSSPNDTPRNNSNNCSSKNNAASSDDADDDTNNEETINQLN) form a disordered region. Low complexity predominate over residues 1363 to 1390 (SPSNPSSPNDTPRNNSNNCSSKNNAASS). One can recognise a Carrier domain in the interval 2507-2584 (GDSGSTQAKV…SIIQRISSKS (78 aa)). At Ser-2544 the chain carries O-(pantetheine 4'-phosphoryl)serine. Positions 2581–2597 (SSKSTSTSTPNPTNTSK) are enriched in low complexity. The segment at 2581 to 2604 (SSKSTSTSTPNPTNTSKQTATKKT) is disordered.

Requires pantetheine 4'-phosphate as cofactor.

Its function is as follows. Probable polyketide synthase. In Dictyostelium discoideum (Social amoeba), this protein is Probable polyketide synthase 17 (pks17).